We begin with the raw amino-acid sequence, 370 residues long: Anhydro-N-acetylmuramic acid kinase (370 aa).

Residue 12–19 (GTSLDGVD) participates in ATP binding.

The protein belongs to the anhydro-N-acetylmuramic acid kinase family.

It carries out the reaction 1,6-anhydro-N-acetyl-beta-muramate + ATP + H2O = N-acetyl-D-muramate 6-phosphate + ADP + H(+). Its pathway is amino-sugar metabolism; 1,6-anhydro-N-acetylmuramate degradation. It participates in cell wall biogenesis; peptidoglycan recycling. In terms of biological role, catalyzes the specific phosphorylation of 1,6-anhydro-N-acetylmuramic acid (anhMurNAc) with the simultaneous cleavage of the 1,6-anhydro ring, generating MurNAc-6-P. Is required for the utilization of anhMurNAc either imported from the medium or derived from its own cell wall murein, and thus plays a role in cell wall recycling. The chain is Anhydro-N-acetylmuramic acid kinase from Pectobacterium carotovorum subsp. carotovorum (strain PC1).